The chain runs to 349 residues: Phosphoribosylformylglycinamidine cyclo-ligase (349 aa).

Belongs to the AIR synthase family.

Its subcellular location is the cytoplasm. The catalysed reaction is 2-formamido-N(1)-(5-O-phospho-beta-D-ribosyl)acetamidine + ATP = 5-amino-1-(5-phospho-beta-D-ribosyl)imidazole + ADP + phosphate + H(+). It functions in the pathway purine metabolism; IMP biosynthesis via de novo pathway; 5-amino-1-(5-phospho-D-ribosyl)imidazole from N(2)-formyl-N(1)-(5-phospho-D-ribosyl)glycinamide: step 2/2. In Methanococcus maripaludis (strain C7 / ATCC BAA-1331), this protein is Phosphoribosylformylglycinamidine cyclo-ligase.